Reading from the N-terminus, the 1024-residue chain is Beta-galactosidase (1024 aa).

Asn103 and Asp202 together coordinate substrate. Asp202 is a Na(+) binding site. Mg(2+) contacts are provided by Glu417, His419, and Glu462. Substrate contacts are provided by residues Glu462 and Glu538–His541. Catalysis depends on Glu462, which acts as the Proton donor. The Nucleophile role is filled by Glu538. Asn598 provides a ligand contact to Mg(2+). Na(+) contacts are provided by Phe602 and Asn605. Substrate-binding residues include Asn605 and Trp1000.

Belongs to the glycosyl hydrolase 2 family. In terms of assembly, homotetramer. Mg(2+) is required as a cofactor. Requires Na(+) as cofactor.

It catalyses the reaction Hydrolysis of terminal non-reducing beta-D-galactose residues in beta-D-galactosides.. The polypeptide is Beta-galactosidase (Escherichia coli O127:H6 (strain E2348/69 / EPEC)).